The following is a 425-amino-acid chain: Glutamate-1-semialdehyde 2,1-aminomutase (425 aa).

K264 bears the N6-(pyridoxal phosphate)lysine mark.

It belongs to the class-III pyridoxal-phosphate-dependent aminotransferase family. HemL subfamily. In terms of assembly, homodimer. It depends on pyridoxal 5'-phosphate as a cofactor.

The protein localises to the cytoplasm. The enzyme catalyses (S)-4-amino-5-oxopentanoate = 5-aminolevulinate. The protein operates within porphyrin-containing compound metabolism; protoporphyrin-IX biosynthesis; 5-aminolevulinate from L-glutamyl-tRNA(Glu): step 2/2. The chain is Glutamate-1-semialdehyde 2,1-aminomutase from Campylobacter lari (strain RM2100 / D67 / ATCC BAA-1060).